The following is a 456-amino-acid chain: Chromosomal replication initiator protein DnaA (456 aa).

A domain I, interacts with DnaA modulators region spans residues 1-83 (MKLKILHFTS…DAFEEESNNG (83 aa)). The domain II stretch occupies residues 83–116 (GVRPEIHIKVKEKKENVKSLKNNKSMLYFNTNGL). A domain III, AAA+ region region spans residues 117 to 331 (SLNPFYTFEN…GILSTINAHI (215 aa)). Residues Gly-161, Gly-163, Lys-164, and Thr-165 each contribute to the ATP site. The domain IV, binds dsDNA stretch occupies residues 332–456 (NLSPESSSLK…SKIQQSLDSV (125 aa)).

Belongs to the DnaA family. As to quaternary structure, oligomerizes as a right-handed, spiral filament on DNA at oriC.

It localises to the cytoplasm. Functionally, plays an essential role in the initiation and regulation of chromosomal replication. ATP-DnaA binds to the origin of replication (oriC) to initiate formation of the DNA replication initiation complex once per cell cycle. Binds the DnaA box (a 9 base pair repeat at the origin) and separates the double-stranded (ds)DNA. Forms a right-handed helical filament on oriC DNA; dsDNA binds to the exterior of the filament while single-stranded (ss)DNA is stabiized in the filament's interior. The ATP-DnaA-oriC complex binds and stabilizes one strand of the AT-rich DNA unwinding element (DUE), permitting loading of DNA polymerase. After initiation quickly degrades to an ADP-DnaA complex that is not apt for DNA replication. Binds acidic phospholipids. The polypeptide is Chromosomal replication initiator protein DnaA (Helicobacter hepaticus (strain ATCC 51449 / 3B1)).